The primary structure comprises 251 residues: Triosephosphate isomerase (251 aa).

9–11 (NWK) is a binding site for substrate. The active-site Electrophile is His-93. The active-site Proton acceptor is the Glu-163. Residues Gly-169, Ser-209, and 230-231 (GG) contribute to the substrate site.

It belongs to the triosephosphate isomerase family. Homodimer.

It is found in the cytoplasm. The catalysed reaction is D-glyceraldehyde 3-phosphate = dihydroxyacetone phosphate. It participates in carbohydrate biosynthesis; gluconeogenesis. The protein operates within carbohydrate degradation; glycolysis; D-glyceraldehyde 3-phosphate from glycerone phosphate: step 1/1. Involved in the gluconeogenesis. Catalyzes stereospecifically the conversion of dihydroxyacetone phosphate (DHAP) to D-glyceraldehyde-3-phosphate (G3P). In Ruegeria pomeroyi (strain ATCC 700808 / DSM 15171 / DSS-3) (Silicibacter pomeroyi), this protein is Triosephosphate isomerase.